We begin with the raw amino-acid sequence, 33 residues long: MSDINATRLPIWGIGCDPCVGDEVTALLTRGEA.

A propeptide spanning residues 1-10 is cleaved from the precursor; sequence MSDINATRLP. Residues 11 to 18 constitute a cross-link (cyclopeptide (Ile-Pro)); the sequence is IWGIGCDP. Residues 12 to 16 constitute a cross-link (2'-cysteinyl-6'-hydroxytryptophan sulfoxide (Trp-Cys)); sequence WGIGC. A propeptide spanning residues 19-33 is cleaved from the precursor; the sequence is CVGDEVTALLTRGEA.

The protein belongs to the MSDIN fungal toxin family. Post-translationally, processed by the macrocyclase-peptidase enzyme POPB to yield a toxic cyclic decapeptide. POPB first removes 10 residues from the N-terminus. Conformational trapping of the remaining peptide forces the enzyme to release this intermediate rather than proceed to macrocyclization. The enzyme rebinds the remaining peptide in a different conformation and catalyzes macrocyclization of the N-terminal 8 residues.

Its function is as follows. Toxin belonging to the bicyclic octapeptides amatoxins that acts by binding non-competitively to RNA polymerase II and greatly slowing the elongation of transcripts from target promoters. The polypeptide is Beta-amanitin proprotein (Amanita fuligineoides).